Reading from the N-terminus, the 230-residue chain is Ribosomal RNA small subunit methyltransferase G (230 aa).

Residues G74, F79, 124-125 (AE), and R141 each bind S-adenosyl-L-methionine.

It belongs to the methyltransferase superfamily. RNA methyltransferase RsmG family.

It is found in the cytoplasm. Specifically methylates the N7 position of a guanine in 16S rRNA. The sequence is that of Ribosomal RNA small subunit methyltransferase G from Acholeplasma laidlawii (strain PG-8A).